The primary structure comprises 447 residues: Glutamate-1-semialdehyde 2,1-aminomutase (447 aa).

N6-(pyridoxal phosphate)lysine is present on Lys272.

The protein belongs to the class-III pyridoxal-phosphate-dependent aminotransferase family. HemL subfamily. Homodimer. Pyridoxal 5'-phosphate is required as a cofactor.

Its subcellular location is the cytoplasm. The enzyme catalyses (S)-4-amino-5-oxopentanoate = 5-aminolevulinate. It functions in the pathway porphyrin-containing compound metabolism; protoporphyrin-IX biosynthesis; 5-aminolevulinate from L-glutamyl-tRNA(Glu): step 2/2. The polypeptide is Glutamate-1-semialdehyde 2,1-aminomutase (Leifsonia xyli subsp. xyli (strain CTCB07)).